We begin with the raw amino-acid sequence, 310 residues long: Uridine phosphorylase 1 (310 aa).

Residues G60, R94, and 138 to 141 (RIGT) each bind phosphate. Uridine contacts are provided by residues 142-143 (SG) and 217-219 (QGR).

Belongs to the PNP/UDP phosphorylase family. In terms of assembly, homodimer.

It carries out the reaction uridine + phosphate = alpha-D-ribose 1-phosphate + uracil. The enzyme catalyses 2'-deoxyuridine + phosphate = 2-deoxy-alpha-D-ribose 1-phosphate + uracil. It participates in pyrimidine metabolism; UMP biosynthesis via salvage pathway; uracil from uridine (phosphorylase route): step 1/1. Catalyzes the reversible phosphorylytic cleavage of uridine to uracil and ribose-1-phosphate which can then be utilized as carbon and energy sources or in the rescue of pyrimidine bases for nucleotide synthesis. Shows broad substrate specificity and can also accept deoxyuridine and other analogous compounds. This Homo sapiens (Human) protein is Uridine phosphorylase 1.